The sequence spans 299 residues: 4-hydroxy-tetrahydrodipicolinate synthase 2 (299 aa).

Thr54 is a pyruvate binding site. The active-site Proton donor/acceptor is the Tyr142. Catalysis depends on Lys170, which acts as the Schiff-base intermediate with substrate. Pyruvate is bound at residue Val210.

The protein belongs to the DapA family. Homotetramer; dimer of dimers.

The protein resides in the cytoplasm. The catalysed reaction is L-aspartate 4-semialdehyde + pyruvate = (2S,4S)-4-hydroxy-2,3,4,5-tetrahydrodipicolinate + H2O + H(+). Its pathway is amino-acid biosynthesis; L-lysine biosynthesis via DAP pathway; (S)-tetrahydrodipicolinate from L-aspartate: step 3/4. Catalyzes the condensation of (S)-aspartate-beta-semialdehyde [(S)-ASA] and pyruvate to 4-hydroxy-tetrahydrodipicolinate (HTPA). This chain is 4-hydroxy-tetrahydrodipicolinate synthase 2, found in Streptomyces coelicolor (strain ATCC BAA-471 / A3(2) / M145).